Consider the following 364-residue polypeptide: Alanine racemase (364 aa).

Lys35 serves as the catalytic Proton acceptor; specific for D-alanine. Position 35 is an N6-(pyridoxal phosphate)lysine (Lys35). Residue Arg130 participates in substrate binding. The active-site Proton acceptor; specific for L-alanine is the Tyr256. Substrate is bound at residue Met304.

Belongs to the alanine racemase family. Pyridoxal 5'-phosphate serves as cofactor.

It catalyses the reaction L-alanine = D-alanine. It participates in amino-acid biosynthesis; D-alanine biosynthesis; D-alanine from L-alanine: step 1/1. Functionally, catalyzes the interconversion of L-alanine and D-alanine. May also act on other amino acids. The chain is Alanine racemase (alr) from Polaromonas sp. (strain JS666 / ATCC BAA-500).